A 385-amino-acid polypeptide reads, in one-letter code: 1-deoxy-D-xylulose 5-phosphate reductoisomerase (385 aa).

Residues threonine 10, glycine 11, serine 12, isoleucine 13, and asparagine 124 each coordinate NADPH. Lysine 125 is a binding site for 1-deoxy-D-xylulose 5-phosphate. An NADPH-binding site is contributed by glutamate 126. Residue aspartate 150 participates in Mn(2+) binding. Serine 151, glutamate 152, serine 176, and histidine 199 together coordinate 1-deoxy-D-xylulose 5-phosphate. Mn(2+) is bound at residue glutamate 152. Glycine 205 is a binding site for NADPH. Residues serine 212, asparagine 217, lysine 218, and glutamate 221 each contribute to the 1-deoxy-D-xylulose 5-phosphate site. Residue glutamate 221 participates in Mn(2+) binding.

The protein belongs to the DXR family. Mg(2+) serves as cofactor. Requires Mn(2+) as cofactor.

It carries out the reaction 2-C-methyl-D-erythritol 4-phosphate + NADP(+) = 1-deoxy-D-xylulose 5-phosphate + NADPH + H(+). It participates in isoprenoid biosynthesis; isopentenyl diphosphate biosynthesis via DXP pathway; isopentenyl diphosphate from 1-deoxy-D-xylulose 5-phosphate: step 1/6. Its function is as follows. Catalyzes the NADPH-dependent rearrangement and reduction of 1-deoxy-D-xylulose-5-phosphate (DXP) to 2-C-methyl-D-erythritol 4-phosphate (MEP). In Clostridium botulinum (strain Eklund 17B / Type B), this protein is 1-deoxy-D-xylulose 5-phosphate reductoisomerase.